A 375-amino-acid chain; its full sequence is Probable sugar phosphate/phosphate translocator At3g17430 (375 aa).

10 helical membrane passes run 9-29, 43-63, 76-96, 106-126, 140-160, 163-183, 193-213, 229-249, 257-276, and 280-302; these read LVLT…VILY, LPIT…FLLI, FEIY…SLWF, VAFI…MAVV, MLLV…FNIV, VYQV…QVLL, ITSL…PWYV, WIFF…FLVI, IRVA…TVIF, and TITG…YNYI. The tract at residues 328-348 is disordered; that stretch reads EKKSSDKFNPNDSVEIPRVGG.

This sequence belongs to the TPT transporter family. TPT (TC 2.A.7.9) subfamily.

Its subcellular location is the membrane. This Arabidopsis thaliana (Mouse-ear cress) protein is Probable sugar phosphate/phosphate translocator At3g17430.